The primary structure comprises 557 residues: CTP synthase (557 aa).

Residues 1-267 (MAKYIFVTGG…GAYLTQRLGL (267 aa)) are amidoligase domain. Serine 13 is a binding site for CTP. Serine 13 lines the UTP pocket. 14–19 (SVGKGI) serves as a coordination point for ATP. L-glutamine is bound at residue tyrosine 54. An ATP-binding site is contributed by aspartate 71. The Mg(2+) site is built by aspartate 71 and glutamate 141. CTP contacts are provided by residues 148 to 150 (DIE), 188 to 193 (KTKPTQ), and lysine 224. Residues 188–193 (KTKPTQ) and lysine 224 contribute to the UTP site. Residues 292–535 (AIALVGKYVE…VAAAAKTFRE (244 aa)) form the Glutamine amidotransferase type-1 domain. Glycine 354 lines the L-glutamine pocket. Cysteine 381 functions as the Nucleophile; for glutamine hydrolysis in the catalytic mechanism. L-glutamine-binding positions include 382 to 385 (LGMQ), glutamate 406, and arginine 463. Residues histidine 508 and glutamate 510 contribute to the active site. The disordered stretch occupies residues 536 to 557 (GDQRPLPLEQNGAVTEHEPHSR).

It belongs to the CTP synthase family. As to quaternary structure, homotetramer.

The enzyme catalyses UTP + L-glutamine + ATP + H2O = CTP + L-glutamate + ADP + phosphate + 2 H(+). The catalysed reaction is L-glutamine + H2O = L-glutamate + NH4(+). It catalyses the reaction UTP + NH4(+) + ATP = CTP + ADP + phosphate + 2 H(+). Its pathway is pyrimidine metabolism; CTP biosynthesis via de novo pathway; CTP from UDP: step 2/2. With respect to regulation, allosterically activated by GTP, when glutamine is the substrate; GTP has no effect on the reaction when ammonia is the substrate. The allosteric effector GTP functions by stabilizing the protein conformation that binds the tetrahedral intermediate(s) formed during glutamine hydrolysis. Inhibited by the product CTP, via allosteric rather than competitive inhibition. Catalyzes the ATP-dependent amination of UTP to CTP with either L-glutamine or ammonia as the source of nitrogen. Regulates intracellular CTP levels through interactions with the four ribonucleotide triphosphates. The polypeptide is CTP synthase (Roseiflexus sp. (strain RS-1)).